The following is a 157-amino-acid chain: Protein Smg (157 aa).

The protein belongs to the Smg family.

In Yersinia pseudotuberculosis serotype O:1b (strain IP 31758), this protein is Protein Smg.